The sequence spans 460 residues: tRNA modification GTPase MnmE (460 aa).

Positions 26, 88, and 127 each coordinate (6S)-5-formyl-5,6,7,8-tetrahydrofolate. The region spanning 222-381 (GLKVAIVGRP…LESAILSKVQ (160 aa)) is the TrmE-type G domain. Residue Asn-232 coordinates K(+). GTP contacts are provided by residues 232–237 (NVGKSS), 251–257 (TELPGTT), and 276–279 (DTAG). Ser-236 serves as a coordination point for Mg(2+). 3 residues coordinate K(+): Thr-251, Leu-253, and Thr-256. Thr-257 lines the Mg(2+) pocket. Position 460 (Lys-460) interacts with (6S)-5-formyl-5,6,7,8-tetrahydrofolate.

Belongs to the TRAFAC class TrmE-Era-EngA-EngB-Septin-like GTPase superfamily. TrmE GTPase family. As to quaternary structure, homodimer. Heterotetramer of two MnmE and two MnmG subunits. It depends on K(+) as a cofactor.

It is found in the cytoplasm. Functionally, exhibits a very high intrinsic GTPase hydrolysis rate. Involved in the addition of a carboxymethylaminomethyl (cmnm) group at the wobble position (U34) of certain tRNAs, forming tRNA-cmnm(5)s(2)U34. The sequence is that of tRNA modification GTPase MnmE from Cyanothece sp. (strain PCC 7425 / ATCC 29141).